We begin with the raw amino-acid sequence, 123 residues long: Prostate stem cell antigen (123 aa).

A signal peptide spans 1 to 20 (MKTVFFLLLATYLALHPGAA). The UPAR/Ly6 domain maps to 21–95 (LQCYSCTAQM…CCYSDLCNVN (75 aa)). Cystine bridges form between Cys-23–Cys-48, Cys-26–Cys-35, Cys-41–Cys-66, Cys-70–Cys-86, and Cys-87–Cys-92. Asn-40 carries N-linked (GlcNAc...) asparagine glycosylation. Asn-95 carries the GPI-anchor amidated asparagine lipid modification. A propeptide spans 96-123 (GAHTLKPPTTLGLLTVLCSLLLWGSSRL) (removed in mature form).

Interacts with CHRNA4. In terms of tissue distribution, predominantly expressed in prostate. Also found in spleen, liver, lung, prostate, kidney and testis. Expressed in brain cortex; expression is increased in transgenic mouse model of Alzheimer disease (at protein level).

It is found in the cell membrane. May be involved in the regulation of cell proliferation. In terms of biological role, may act as a modulator of nicotinic acetylcholine receptors (nAChRs) activity. In vitro inhibits nicotine-induced signaling probably implicating alpha-3:beta-2- or alpha-7-containing nAChRs. The polypeptide is Prostate stem cell antigen (Psca) (Mus musculus (Mouse)).